Consider the following 174-residue polypeptide: Large ribosomal subunit protein uL10 (174 aa).

This sequence belongs to the universal ribosomal protein uL10 family. In terms of assembly, part of the ribosomal stalk of the 50S ribosomal subunit. The N-terminus interacts with L11 and the large rRNA to form the base of the stalk. The C-terminus forms an elongated spine to which L12 dimers bind in a sequential fashion forming a multimeric L10(L12)X complex.

Its function is as follows. Forms part of the ribosomal stalk, playing a central role in the interaction of the ribosome with GTP-bound translation factors. In Bordetella bronchiseptica (strain ATCC BAA-588 / NCTC 13252 / RB50) (Alcaligenes bronchisepticus), this protein is Large ribosomal subunit protein uL10.